The primary structure comprises 207 residues: Ribosomal RNA large subunit methyltransferase E (207 aa).

The S-adenosyl-L-methionine site is built by Gly60, Trp62, Asp80, Asp96, and Asp121. Lys161 acts as the Proton acceptor in catalysis.

It belongs to the class I-like SAM-binding methyltransferase superfamily. RNA methyltransferase RlmE family.

The protein resides in the cytoplasm. The catalysed reaction is uridine(2552) in 23S rRNA + S-adenosyl-L-methionine = 2'-O-methyluridine(2552) in 23S rRNA + S-adenosyl-L-homocysteine + H(+). Functionally, specifically methylates the uridine in position 2552 of 23S rRNA at the 2'-O position of the ribose in the fully assembled 50S ribosomal subunit. The protein is Ribosomal RNA large subunit methyltransferase E of Azotobacter vinelandii (strain DJ / ATCC BAA-1303).